The sequence spans 268 residues: Interleukin-1 alpha (268 aa).

Residues Met1–Arg112 constitute a propeptide that is removed on maturation. At Lys82 the chain carries N6-acetyllysine. The nuclear localization signal (NLS) stretch occupies residues Lys82–Leu86. Ser87 is modified (phosphoserine). Residues Asn102 and Asn141 are each glycosylated (N-linked (GlcNAc...) asparagine).

The protein belongs to the IL-1 family. In terms of assembly, monomer. Interacts with TMED10; the interaction mediates the translocation from the cytoplasm into the ERGIC (endoplasmic reticulum-Golgi intermediate compartment) and thereby secretion. Interacts with IL1R1. Interacts with S100A13; this interaction is the first step in the export of IL1A, followed by direct translocation of this complex across the plasma membrane. Post-translationally, acetylated within its nuclear localization sequence, which impacts subcellular localization. In terms of processing, proteolytic processed by CAPN1 in a calcium-dependent manner. Cleavage from 31 kDa precursor to 18 kDa biologically active molecules. Phosphorylated. Phosphorylation greatly enhances susceptibility to digestion and promotes the conversion of pre-IL1A alpha to the biologically active IL1A.

The protein resides in the nucleus. Its subcellular location is the cytoplasm. It localises to the secreted. Functionally, cytokine constitutively present intracellularly in nearly all resting non-hematopoietic cells that plays an important role in inflammation and bridges the innate and adaptive immune systems. After binding to its receptor IL1R1 together with its accessory protein IL1RAP, forms the high affinity interleukin-1 receptor complex. Signaling involves the recruitment of adapter molecules such as MYD88, IRAK1 or IRAK4. In turn, mediates the activation of NF-kappa-B and the three MAPK pathways p38, p42/p44 and JNK pathways. Within the cell, acts as an alarmin and cell death results in its liberation in the extracellular space after disruption of the cell membrane to induce inflammation and alert the host to injury or damage. In addition to its role as a danger signal, which occurs when the cytokine is passively released by cell necrosis, directly senses DNA damage and acts as signal for genotoxic stress without loss of cell integrity. This is Interleukin-1 alpha (IL1A) from Capra hircus (Goat).